A 155-amino-acid polypeptide reads, in one-letter code: Small ribosomal subunit protein uS7c (155 aa).

This sequence belongs to the universal ribosomal protein uS7 family. Part of the 30S ribosomal subunit.

It localises to the plastid. It is found in the chloroplast. In terms of biological role, one of the primary rRNA binding proteins, it binds directly to 16S rRNA where it nucleates assembly of the head domain of the 30S subunit. The protein is Small ribosomal subunit protein uS7c (rps7) of Pinus thunbergii (Japanese black pine).